We begin with the raw amino-acid sequence, 316 residues long: Protein lifeguard 2 (316 aa).

The interval 1–49 (MTQGKLSVANKAPGTEGQQQANGEKKDAPAVPSAPPSYEEATSGEGLKA) is disordered. Transmembrane regions (helical) follow at residues 106–126 (VYTI…LFTF), 138–158 (PGWY…LACC), and 165–185 (FPWN…LTGM). N191 is a glycosylation site (N-linked (GlcNAc...) asparagine). A run of 4 helical transmembrane segments spans residues 194 to 214 (SVLL…IFSF), 225 to 245 (GVLF…AILL), 251 to 271 (PWLH…FLAF), and 290 to 310 (IFGA…FLQL).

It belongs to the BI1 family. LFG subfamily. Interacts with FAS/TNFRSF6 and BAX. In terms of tissue distribution, expressed at high levels on dendrites and to a lesser extent on the soma and axons of neurons in various regions of brain.

It is found in the cell membrane. The protein resides in the membrane raft. The protein localises to the postsynaptic cell membrane. Functionally, antiapoptotic protein which protects cells uniquely from Fas-induced apoptosis. Regulates Fas-mediated apoptosis in neurons by interfering with caspase-8 activation. Plays a role in cerebellar development by affecting cerebellar size, internal granular layer (IGL) thickness, and Purkinje cell (PC) development. The protein is Protein lifeguard 2 (Faim2) of Rattus norvegicus (Rat).